The chain runs to 547 residues: uncharacterized protein (547 aa).

It to B.pertussis prn N-terminal region.

This is an uncharacterized protein from Escherichia coli O157:H7.